A 385-amino-acid polypeptide reads, in one-letter code: Putative UDP-N-acetylglucosamine 2-epimerase (385 aa).

It belongs to the UDP-N-acetylglucosamine 2-epimerase family.

It is found in the cytoplasm. It carries out the reaction UDP-N-acetyl-alpha-D-glucosamine = UDP-N-acetyl-alpha-D-mannosamine. The protein is Putative UDP-N-acetylglucosamine 2-epimerase of Clostridium acetobutylicum (strain ATCC 824 / DSM 792 / JCM 1419 / IAM 19013 / LMG 5710 / NBRC 13948 / NRRL B-527 / VKM B-1787 / 2291 / W).